The chain runs to 585 residues: Aspartate--tRNA(Asp/Asn) ligase (585 aa).

L-aspartate is bound at residue Glu173. The tract at residues 197-200 (QLFK) is aspartate. Arg219 is an L-aspartate binding site. ATP-binding positions include 219–221 (RDE) and Gln228. His447 is a binding site for L-aspartate. Glu477 is a binding site for ATP. Arg484 contributes to the L-aspartate binding site. 529 to 532 (GFDR) serves as a coordination point for ATP.

This sequence belongs to the class-II aminoacyl-tRNA synthetase family. Type 1 subfamily. Homodimer.

It is found in the cytoplasm. The enzyme catalyses tRNA(Asx) + L-aspartate + ATP = L-aspartyl-tRNA(Asx) + AMP + diphosphate. Aspartyl-tRNA synthetase with relaxed tRNA specificity since it is able to aspartylate not only its cognate tRNA(Asp) but also tRNA(Asn). Reaction proceeds in two steps: L-aspartate is first activated by ATP to form Asp-AMP and then transferred to the acceptor end of tRNA(Asp/Asn). This is Aspartate--tRNA(Asp/Asn) ligase from Campylobacter concisus (strain 13826).